The sequence spans 265 residues: MGAAVFFGCTFVAFGPAFSLFLITVAGDPLRVIILVAGAFFWLVSLLLASVVWFILVHVTDRSDARLQYGLLIFGAAVSVLLQEVFRFAYYKLLKKADEGLASLSEDGRSPISIRQMAYVSGLSFGIISGVFSVINILADALGPGVVGIHGDSPYYFLTSAFLTAAIILLHTFWGVVFFDACERRRYWALGLVVGSHLLTSGLTFLNPWYEASLLPIYAVTVSMGLWAFITAGGSLRSIQRSLSCRRQEDSRVMVYSALRIPPED.

Topologically, residues 1-2 are lumenal; it reads MG. The helical transmembrane segment at 3 to 23 threads the bilayer; the sequence is AAVFFGCTFVAFGPAFSLFLI. Over 24-31 the chain is Cytoplasmic; the sequence is TVAGDPLR. The chain crosses the membrane as a helical span at residues 32–52; that stretch reads VIILVAGAFFWLVSLLLASVV. Residues 53 to 68 lie on the Lumenal side of the membrane; it reads WFILVHVTDRSDARLQ. A helical transmembrane segment spans residues 69 to 89; that stretch reads YGLLIFGAAVSVLLQEVFRFA. Topologically, residues 90–118 are cytoplasmic; it reads YYKLLKKADEGLASLSEDGRSPISIRQMA. Residues 119–139 form a helical membrane-spanning segment; sequence YVSGLSFGIISGVFSVINILA. The Lumenal segment spans residues 140 to 158; the sequence is DALGPGVVGIHGDSPYYFL. A helical membrane pass occupies residues 159–179; the sequence is TSAFLTAAIILLHTFWGVVFF. The Cytoplasmic segment spans residues 180 to 186; the sequence is DACERRR. The helical transmembrane segment at 187–207 threads the bilayer; that stretch reads YWALGLVVGSHLLTSGLTFLN. At 208 to 213 the chain is on the lumenal side; it reads PWYEAS. Residues 214–234 traverse the membrane as a helical segment; sequence LLPIYAVTVSMGLWAFITAGG. Residues 235-265 lie on the Cytoplasmic side of the membrane; that stretch reads SLRSIQRSLSCRRQEDSRVMVYSALRIPPED.

It belongs to the APH-1 family. As to quaternary structure, the functional gamma-secretase complex is composed of at least four polypeptides: a presenilin homodimer (PSEN1 or PSEN2), nicastrin (NCSTN), APH1 (APH1A or APH1B) and PSENEN/PEN2.

Its subcellular location is the endoplasmic reticulum membrane. The protein localises to the golgi apparatus. It is found in the golgi stack membrane. Non-catalytic subunit of the gamma-secretase complex, an endoprotease complex that catalyzes the intramembrane cleavage of integral membrane proteins such as Notch receptors and APP (amyloid-beta precursor protein). Required for normal gamma-secretase assembly. The gamma-secretase complex plays a role in Notch and Wnt signaling cascades and regulation of downstream processes via its role in processing key regulatory proteins, and by regulating cytosolic CTNNB1 levels. The sequence is that of Gamma-secretase subunit APH-1A (Aph1a) from Mus musculus (Mouse).